A 246-amino-acid polypeptide reads, in one-letter code: Triosephosphate isomerase (246 aa).

9-11 (NWK) provides a ligand contact to substrate. His99 acts as the Electrophile in catalysis. Glu168 acts as the Proton acceptor in catalysis. Residues Gly174, Ser207, and 228–229 (GG) each bind substrate.

This sequence belongs to the triosephosphate isomerase family. As to quaternary structure, homodimer.

The protein localises to the cytoplasm. It carries out the reaction D-glyceraldehyde 3-phosphate = dihydroxyacetone phosphate. It participates in carbohydrate biosynthesis; gluconeogenesis. It functions in the pathway carbohydrate degradation; glycolysis; D-glyceraldehyde 3-phosphate from glycerone phosphate: step 1/1. Functionally, involved in the gluconeogenesis. Catalyzes stereospecifically the conversion of dihydroxyacetone phosphate (DHAP) to D-glyceraldehyde-3-phosphate (G3P). The protein is Triosephosphate isomerase of Prochlorococcus marinus (strain NATL2A).